The following is a 659-amino-acid chain: Siderophore transporter fer7 (659 aa).

Positions 1–62 (MSNQAQDQPE…ADASSAREGQ (62 aa)) are disordered. Polar residues predominate over residues 31–41 (QSVSAHGNTSL). An N-linked (GlcNAc...) asparagine glycan is attached at asparagine 38. The span at 42–54 (NKKDRVSAVRDAD) shows a compositional bias: basic and acidic residues. The next 8 helical transmembrane spans lie at 79 to 99 (NSPIVYTVYASLAAVTICFAL), 121 to 141 (LFGVIATVEAILNAVSKPFIA), 150 to 170 (QTAYFLVAVFYTIGFVVVASA), 208 to 228 (GVVTALTSSPFIVLPWVGNLI), 245 to 265 (GMFAIMAPVCVAPIILVLMYV), 316 to 336 (LVGLFLLALSFSLLLVPFSIY), 348 to 368 (IIAMFVCGGVILGMFLAWEIL), and 379 to 399 (VWYNRTFLLAVTIDIFYFMGG). An N-linked (GlcNAc...) asparagine glycan is attached at asparagine 415. 2 consecutive transmembrane segments (helical) span residues 424–444 (VVNALATCALSVFGLAAGFYL) and 451–471 (KFLQIGGLVIRIVAMGLYLYG). N-linked (GlcNAc...) asparagine glycosylation is present at asparagine 475. Helical transmembrane passes span 478–498 (TMVVAWSQILNSLGGACSVVG), 528–548 (AIGSAIAAGIWTGTLPDYLAA), and 590–610 (PIFIVALVLAFIPLFAGLLMP).

It belongs to the major facilitator superfamily.

Its subcellular location is the membrane. Its function is as follows. Siderophore transporter; part of the gene cluster that mediates the biosynthesis of siderophore ferrichrome A which is contributing to organismal virulence. This is Siderophore transporter fer7 from Mycosarcoma maydis (Corn smut fungus).